The following is a 241-amino-acid chain: Ribosomal RNA small subunit methyltransferase G (241 aa).

S-adenosyl-L-methionine is bound by residues G96, F101, 119-121 (EAS), 147-148 (VE), and R166.

This sequence belongs to the methyltransferase superfamily. RNA methyltransferase RsmG family.

The protein resides in the cytoplasm. It catalyses the reaction guanosine(527) in 16S rRNA + S-adenosyl-L-methionine = N(7)-methylguanosine(527) in 16S rRNA + S-adenosyl-L-homocysteine. Its function is as follows. Specifically methylates the N7 position of guanine in position 527 of 16S rRNA. The protein is Ribosomal RNA small subunit methyltransferase G of Syntrophus aciditrophicus (strain SB).